We begin with the raw amino-acid sequence, 406 residues long: Na(+)/H(+) antiporter NhaA (406 aa).

12 helical membrane-spanning segments follow: residues 29 to 49 (FAGI…NNIF), 75 to 95 (FIEL…GLEM), 111 to 131 (ILPA…YMFF), 141 to 161 (GWAI…SFFS), 170 to 190 (AFII…LALF), 195 to 215 (INTP…ILNY), 220 to 240 (QLFY…ESGI), 242 to 262 (GTLC…GEFN), 278 to 298 (YFIL…YFAF), 306 to 326 (ILAL…LGIM), 349 to 369 (FYSI…IGSI), and 382 to 402 (AAVI…LKYC).

It belongs to the NhaA Na(+)/H(+) (TC 2.A.33) antiporter family.

The protein resides in the cell inner membrane. It carries out the reaction Na(+)(in) + 2 H(+)(out) = Na(+)(out) + 2 H(+)(in). Functionally, na(+)/H(+) antiporter that extrudes sodium in exchange for external protons. The polypeptide is Na(+)/H(+) antiporter NhaA (Rickettsia massiliae (strain Mtu5)).